The chain runs to 443 residues: Ribulose bisphosphate carboxylase large chain (443 aa).

Asn89 and Thr139 together coordinate substrate. Lys141 functions as the Proton acceptor in the catalytic mechanism. Lys143 serves as a coordination point for substrate. Mg(2+) is bound by residues Lys167, Asp169, and Glu170. Residue Lys167 is modified to N6-carboxylysine. His260 functions as the Proton acceptor in the catalytic mechanism. The substrate site is built by Arg261, His293, and Ser345.

This sequence belongs to the RuBisCO large chain family. Type I subfamily. Heterohexadecamer of 8 large chains and 8 small chains; disulfide-linked. The disulfide link is formed within the large subunit homodimers. Mg(2+) serves as cofactor. In terms of processing, the disulfide bond which can form in the large chain dimeric partners within the hexadecamer appears to be associated with oxidative stress and protein turnover.

Its subcellular location is the plastid. The protein resides in the chloroplast. The catalysed reaction is 2 (2R)-3-phosphoglycerate + 2 H(+) = D-ribulose 1,5-bisphosphate + CO2 + H2O. It catalyses the reaction D-ribulose 1,5-bisphosphate + O2 = 2-phosphoglycolate + (2R)-3-phosphoglycerate + 2 H(+). In terms of biological role, ruBisCO catalyzes two reactions: the carboxylation of D-ribulose 1,5-bisphosphate, the primary event in carbon dioxide fixation, as well as the oxidative fragmentation of the pentose substrate in the photorespiration process. Both reactions occur simultaneously and in competition at the same active site. This is Ribulose bisphosphate carboxylase large chain from Antirrhinum majus (Garden snapdragon).